The chain runs to 398 residues: Cysteine protease ATG4A (398 aa).

The Nucleophile role is filled by Cys77. Catalysis depends on residues Asp279 and His281. Positions 393–396 (FEIL) match the LIR motif.

This sequence belongs to the peptidase C54 family. As to quaternary structure, interacts with ATG9A; the interaction is direct.

The protein resides in the cytoplasm. The enzyme catalyses [protein]-C-terminal L-amino acid-glycyl-phosphatidylethanolamide + H2O = [protein]-C-terminal L-amino acid-glycine + a 1,2-diacyl-sn-glycero-3-phosphoethanolamine. Inhibited by N-ethylmaleimide. Redox-regulated during autophagy since reducing conditions activate ATG4A whereas an oxidizing environment such as the presence of H(2)O(2) inhibits its activity. Its function is as follows. Cysteine protease that plays a key role in autophagy by mediating both proteolytic activation and delipidation of ATG8 family proteins. The protease activity is required for proteolytic activation of ATG8 family proteins: cleaves the C-terminal amino acid of ATG8 proteins to reveal a C-terminal glycine. Exposure of the glycine at the C-terminus is essential for ATG8 proteins conjugation to phosphatidylethanolamine (PE) and insertion to membranes, which is necessary for autophagy. Preferred substrate is GABARAPL2 followed by MAP1LC3A and GABARAP. Protease activity is also required to counteract formation of high-molecular weight conjugates of ATG8 proteins (ATG8ylation): acts as a deubiquitinating-like enzyme that removes ATG8 conjugated to other proteins, such as ATG3. In addition to the protease activity, also mediates delipidation of ATG8 family proteins. Catalyzes delipidation of PE-conjugated forms of ATG8 proteins during macroautophagy. Compared to ATG4B, the major protein for proteolytic activation of ATG8 proteins, shows weaker ability to cleave the C-terminal amino acid of ATG8 proteins, while it displays stronger delipidation activity. Involved in phagophore growth during mitophagy independently of its protease activity and of ATG8 proteins: acts by regulating ATG9A trafficking to mitochondria and promoting phagophore-endoplasmic reticulum contacts during the lipid transfer phase of mitophagy. The sequence is that of Cysteine protease ATG4A from Homo sapiens (Human).